The following is a 66-amino-acid chain: Large ribosomal subunit protein bL35 (66 aa).

The span at 1–14 (MPKMKTKSAAKKRF) shows a compositional bias: basic residues. Residues 1-34 (MPKMKTKSAAKKRFSMTATGKVKAGPAGKRHGMI) are disordered.

The protein belongs to the bacterial ribosomal protein bL35 family.

In Paracoccus denitrificans (strain Pd 1222), this protein is Large ribosomal subunit protein bL35.